A 463-amino-acid chain; its full sequence is MALSCTLNRYLLLMAQEHLEFRLPEIKSLLSLFGGQFGSSQETFGKSPFWILSIPSEDIARNLMKRTVCAKSIFELWGHGQSPEELYSSLKNYPVEKMVPFLHSDSTYKIKIHTFNKTLTQEEKIKRIDALEFLPFEGKVNLKKPQHVFSVLEDYGLDPNCIPENPHNIYFGRWIADGQRELIESYSVKKRHFIGNTSMDAGLSFIMANHGKVKENDIVFDPFVGTGGLLIACAHFGAYVYGTDIDYNTVHGLGKATRKNQKWRGPDENIRANLRQYGLEKYYLDVLVSDASKPSWRKGTYFDAIITDPPYGIRESTRRTGSQKEIPKGIEKWEKCPESHVPVSLSYHLSDMFLDLLNFAAETLVLGGRLVYWLPVYTPEYTEEMVPWHPCLELISNCEQKLSSHTSRRLITMEKVKKFENRDQYSHLLSDHFLPYQGHNSFREKYFSGVTKRIAKEEKSTQE.

N-acetylalanine is present on Ala2.

The protein belongs to the class I-like SAM-binding methyltransferase superfamily. TRM11 methyltransferase family. In terms of assembly, part of the heterodimeric TRMT11-TRM112 methyltransferase complex; this complex forms an active tRNA methyltransferase, where TRMT112 acts as an activator of the catalytic subunit TRMT11.

Its subcellular location is the cytoplasm. The enzyme catalyses guanosine(10) in tRNA + S-adenosyl-L-methionine = N(2)-methylguanosine(10) in tRNA + S-adenosyl-L-homocysteine + H(+). In terms of biological role, catalytic subunit of the TRMT11-TRM112 methyltransferase complex, that specifically mediates the S-adenosyl-L-methionine-dependent N(2)-methylation of guanosine nucleotide at position 10 (m2G10) in tRNAs. This is one of the major tRNA (guanine-N(2))-methyltransferases. This is tRNA (guanine(10)-N(2))-methyltransferase TRMT11 from Pongo abelii (Sumatran orangutan).